The chain runs to 372 residues: 18-hydroxynorfluorocurarine reductase (372 aa).

Positions 47, 50, 69, 70, 100, 103, 106, 114, and 172 each coordinate Zn(2+). NADP(+) is bound by residues 197-202, Lys226, 283-285, Ser307, and Arg354; these read GLGGIG and LGA.

Belongs to the zinc-containing alcohol dehydrogenase family. As to quaternary structure, homodimer. It depends on Zn(2+) as a cofactor. In terms of tissue distribution, mainly expressed in roots.

It catalyses the reaction (19E)-cur-19-en-17-al + NADP(+) = norfluorocurarine + NADPH + H(+). The catalysed reaction is 17,18-epoxy-17-hydroxycur-19-ene + NADP(+) = 18-hydroxynorfluorocurarine + NADPH + H(+). It participates in alkaloid biosynthesis. In terms of biological role, alcohol dehydrogenase involved in the biosynthesis of curare monoterpene indole alkaloids (MIAs), natural products such as strychnine, a neurotoxic compound used as a pesticide to control rodents, and its pharmacologically active derivatives, including brucine, used to regulate blood pressure. Curare alkaloids act as animal glycine receptor antagonists. Catalyzes the conversion of norfluorocurarine to desoxy Wieland-Gumlich aldehyde, and of 18-OH norfluorocurarine to Wieland-Gumlich aldehyde. The sequence is that of 18-hydroxynorfluorocurarine reductase from Strychnos nux-vomica (Poison nut).